The chain runs to 1019 residues: Insulin-degrading enzyme (1019 aa).

Zn(2+) is bound at residue His108. Glu111 functions as the Proton acceptor in the catalytic mechanism. 2 residues coordinate Zn(2+): His112 and Glu189. Lys192 is modified (N6-succinyllysine). Residue 359–363 (LVGGQ) coordinates substrate. ATP is bound at residue Arg429. Lys697 bears the N6-succinyllysine mark. Positions 853–858 (EKPPHY) match the SlyX motif motif. 895–901 (DKPKKLS) is a binding site for ATP.

It belongs to the peptidase M16 family. Homodimer. Can also form homotetramers. Zn(2+) is required as a cofactor. Detected in brain and liver (at protein level). Detected in liver.

The protein resides in the cytoplasm. It is found in the cytosol. Its subcellular location is the cell membrane. It localises to the secreted. It catalyses the reaction Degradation of insulin, glucagon and other polypeptides. No action on proteins.. With respect to regulation, activated by ATP, other nucleotide triphosphates and small peptides. Inhibited by bacitracin. Its function is as follows. Plays a role in the cellular breakdown of insulin, APP peptides, IAPP peptides, natriuretic peptides, glucagon, bradykinin, kallidin, and other peptides, and thereby plays a role in intercellular peptide signaling. Substrate binding induces important conformation changes, making it possible to bind and degrade larger substrates, such as insulin. Contributes to the regulation of peptide hormone signaling cascades and regulation of blood glucose homeostasis via its role in the degradation of insulin, glucagon and IAPP. Plays a role in the degradation and clearance of APP-derived amyloidogenic peptides that are secreted by neurons and microglia. Degrades the natriuretic peptides ANP, BNP and CNP, inactivating their ability to raise intracellular cGMP. Also degrades an aberrant frameshifted 40-residue form of NPPA (fsNPPA) which is associated with familial atrial fibrillation in heterozygous patients. Involved in antigen processing. Produces both the N terminus and the C terminus of MAGEA3-derived antigenic peptide (EVDPIGHLY) that is presented to cytotoxic T lymphocytes by MHC class I. The sequence is that of Insulin-degrading enzyme (Ide) from Mus musculus (Mouse).